Reading from the N-terminus, the 3003-residue chain is MAX gene-associated protein (3003 aa).

Residues K4 and K178 each participate in a glycyl lysine isopeptide (Lys-Gly) (interchain with G-Cter in SUMO2) cross-link. The T-box DNA-binding region spans 84 to 260; it reads MWNEFHNRST…YNPFAKGFRD (177 aa). The span at 259-277 shows a compositional bias: basic and acidic residues; it reads RDDGLSSKPQREGKQRNSS. The segment at 259–290 is disordered; sequence RDDGLSSKPQREGKQRNSSDQEGNSVSSSPAH. Polar residues predominate over residues 278 to 288; that stretch reads DQEGNSVSSSP. Residues K323, K329, K348, K431, K458, K463, and K480 each participate in a glycyl lysine isopeptide (Lys-Gly) (interchain with G-Cter in SUMO2) cross-link. S531 carries the phosphoserine modification. The tract at residues 553-647 is disordered; that stretch reads ILDNSSTERI…NIPVGPGSTF (95 aa). K567 is covalently cross-linked (Glycyl lysine isopeptide (Lys-Gly) (interchain with G-Cter in SUMO2)). Residues 595-607 are compositionally biased toward polar residues; the sequence is KTVTASHSASPNT. S604 bears the Phosphoserine mark. Residues K610, K651, K782, K788, K814, and K823 each participate in a glycyl lysine isopeptide (Lys-Gly) (interchain with G-Cter in SUMO2) cross-link. The segment covering 610–621 has biased composition (basic residues); the sequence is KRGRPRKLRLSK. Phosphoserine is present on S848. Positions 871–913 are enriched in polar residues; that stretch reads KQSTISPSTSHSVKPQSVTTASRKTKAQNKQTTLSGRTKSSYK. Disordered stretches follow at residues 871–946 and 967–987; these read KQST…TSDN and LRQA…GLSK. S921 bears the Phosphoserine mark. A Glycyl lysine isopeptide (Lys-Gly) (interchain with G-Cter in SUMO2) cross-link involves residue K925. A compositionally biased stretch (polar residues) spans 937–946; the sequence is KNSLSSTSDN. Residues 969 to 978 are compositionally biased toward low complexity; it reads QAQQQHLQQQ. Residues K987 and K1088 each participate in a glycyl lysine isopeptide (Lys-Gly) (interchain with G-Cter in SUMO2) cross-link. Residues 1111 to 1130 form a disordered region; sequence LGEEGREGGGVREDEEQLKE. Basic and acidic residues predominate over residues 1113-1122; it reads EEGREGGGVR. Residues K1136, K1158, K1194, and K1202 each participate in a glycyl lysine isopeptide (Lys-Gly) (interchain with G-Cter in SUMO2) cross-link. Disordered stretches follow at residues 1186–1215, 1246–1277, 1297–1323, and 1376–1424; these read QPDL…NPVI, QRQL…TKEL, SQEK…RSPG, and RGEK…DISP. Composition is skewed to low complexity over residues 1248–1269 and 1303–1315; these read QLSP…YSSP and KSSC…SSTS. Phosphoserine is present on residues S1423 and S1450. Residues K1454 and K1495 each participate in a glycyl lysine isopeptide (Lys-Gly) (interchain with G-Cter in SUMO2) cross-link. Disordered stretches follow at residues 1476–1508, 1722–1746, 1856–1885, 1920–1954, 1964–1983, and 1988–2038; these read AKVA…RSGK, PPVS…SNNV, ISPP…PVGT, IKKE…KALD, SGII…GGDL, and TLRE…AGSK. Composition is skewed to polar residues over residues 1488–1507, 1735–1746, and 1859–1880; these read LPST…NRSG, PVTTPQISSNNV, and PETQ…STGG. Glycyl lysine isopeptide (Lys-Gly) (interchain with G-Cter in SUMO2) cross-links involve residues K1937 and K1944. Positions 1964–1976 are enriched in polar residues; that stretch reads SGIIASENTSNNS. Glycyl lysine isopeptide (Lys-Gly) (interchain with G-Cter in SUMO2) cross-links involve residues K2060 and K2084. The tract at residues 2087 to 2110 is disordered; it reads LSGNQVKEQQSNSQAEAKKDCEDS. Over residues 2088–2101 the composition is skewed to polar residues; sequence SGNQVKEQQSNSQA. Residues K2104, K2152, and K2179 each participate in a glycyl lysine isopeptide (Lys-Gly) (interchain with G-Cter in SUMO2) cross-link. R2206 is subject to Omega-N-methylarginine. Residues 2207-2255 form a disordered region; the sequence is GSRHFQGHLLLPREQMKPKQQTKDGRSSAADFTVLDLEDEDEEDEKTDD. A compositionally biased stretch (basic and acidic residues) spans 2220-2232; that stretch reads EQMKPKQQTKDGR. K2225 is covalently cross-linked (Glycyl lysine isopeptide (Lys-Gly) (interchain with G-Cter in SUMO2)). The span at 2242-2255 shows a compositional bias: acidic residues; that stretch reads DLEDEDEEDEKTDD. Residues K2317, K2352, K2396, and K2471 each participate in a glycyl lysine isopeptide (Lys-Gly) (interchain with G-Cter in SUMO2) cross-link. Residues 2362 to 2413 enclose the bHLH domain; the sequence is YYRRTHTANERRRRGEMRDLFEKLKITLGLLHSSKVSKSLILNRAFSEIQGL. S2480 bears the Phosphoserine mark. The interval 2515 to 2534 is disordered; the sequence is KRDQATENASPSDTPHSSAN. Over residues 2520–2534 the composition is skewed to polar residues; the sequence is TENASPSDTPHSSAN. Glycyl lysine isopeptide (Lys-Gly) (interchain with G-Cter in SUMO2) cross-links involve residues K2568 and K2618. Positions 2629–2651 are enriched in basic and acidic residues; it reads SEASSLKDTERISSRGNHRDSRK. The segment at 2629–2654 is disordered; it reads SEASSLKDTERISSRGNHRDSRKALG. K2724 participates in a covalent cross-link: Glycyl lysine isopeptide (Lys-Gly) (interchain with G-Cter in SUMO2). S2849 and S2860 each carry phosphoserine. Residues 2877 to 2917 form a disordered region; sequence LVSHRKSSDGGQSTSGLPAEPESVSSPPILHMKTGPENSNT. Residue K2979 forms a Glycyl lysine isopeptide (Lys-Gly) (interchain with G-Cter in SUMO2) linkage.

In terms of assembly, component of some MLL1/MLL complex, at least composed of the core components KMT2A/MLL1, ASH2L, HCFC1/HCF1, WDR5 and RBBP5, as well as the facultative components BACC1, CHD8, E2F6, HSP70, INO80C, KANSL1, LAS1L, MAX, MCRS1, MGA, MYST1/MOF, PELP1, PHF20, PRP31, RING2, RUVB1/TIP49A, RUVB2/TIP49B, SENP3, TAF1, TAF4, TAF6, TAF7, TAF9 and TEX10. Interacts with ZMYND11. Interacts with MAX. Requires heterodimerization with MAX for E-box binding. In terms of tissue distribution, highly expressed in germ cells and granulosa cells.

The protein resides in the nucleus. In terms of biological role, functions as a dual-specificity transcription factor, regulating the expression of both MAX-network and T-box family target genes. Functions as a repressor or an activator. Binds to 5'-AATTTCACACCTAGGTGTGAAATT-3' core sequence and seems to regulate MYC-MAX target genes. Suppresses transcriptional activation by MYC and inhibits MYC-dependent cell transformation. Function activated by heterodimerization with MAX. This heterodimerization serves the dual function of both generating an E-box-binding heterodimer and simultaneously blocking interaction of a corepressor. The chain is MAX gene-associated protein from Mus musculus (Mouse).